Here is a 242-residue protein sequence, read N- to C-terminus: MILLGVNIDHVATLRQARGTRYPSPVEAALVAESSGADLITLHLREDRRHIQDADVKAMRPVLKTRMNLEMAMTPEMLAHALQVAPEDVCLVPEKREEVTTEGGLDVRGHYADVKHYTGKLTEAGIRVSIFIDPDREQIQKAFDAGARVIELHTGAYADAPHASEREAELARIREAAEFGASLGMVVNAGHGLNYHNVKPIAAIPQIAELNIGHAIVAHALFVGFPQAVREMKALMESARAR.

Residue Asn7 participates in 3-amino-2-oxopropyl phosphate binding. 9-10 is a binding site for 1-deoxy-D-xylulose 5-phosphate; the sequence is DH. Arg18 lines the 3-amino-2-oxopropyl phosphate pocket. The active-site Proton acceptor is the His43. 1-deoxy-D-xylulose 5-phosphate is bound by residues Arg45 and His50. The active-site Proton acceptor is the Glu70. Thr100 contacts 1-deoxy-D-xylulose 5-phosphate. His191 functions as the Proton donor in the catalytic mechanism. 3-amino-2-oxopropyl phosphate-binding positions include Gly192 and 213 to 214; that span reads GH.

It belongs to the PNP synthase family. Homooctamer; tetramer of dimers.

Its subcellular location is the cytoplasm. It catalyses the reaction 3-amino-2-oxopropyl phosphate + 1-deoxy-D-xylulose 5-phosphate = pyridoxine 5'-phosphate + phosphate + 2 H2O + H(+). Its pathway is cofactor biosynthesis; pyridoxine 5'-phosphate biosynthesis; pyridoxine 5'-phosphate from D-erythrose 4-phosphate: step 5/5. Catalyzes the complicated ring closure reaction between the two acyclic compounds 1-deoxy-D-xylulose-5-phosphate (DXP) and 3-amino-2-oxopropyl phosphate (1-amino-acetone-3-phosphate or AAP) to form pyridoxine 5'-phosphate (PNP) and inorganic phosphate. This chain is Pyridoxine 5'-phosphate synthase, found in Chromobacterium violaceum (strain ATCC 12472 / DSM 30191 / JCM 1249 / CCUG 213 / NBRC 12614 / NCIMB 9131 / NCTC 9757 / MK).